The sequence spans 85 residues: uncharacterized protein (85 aa).

This sequence belongs to the ycf76 family.

It is found in the plastid. The protein resides in the chloroplast. This is an uncharacterized protein from Saccharum hybrid (Sugarcane).